The following is a 252-amino-acid chain: Phosphonates import ATP-binding protein PhnC 1 (252 aa).

Residues 2-244 (ISLNKLGVTY…QLEEIYQTLS (243 aa)) enclose the ABC transporter domain. ATP is bound at residue 35 to 42 (GSSGAGKS).

This sequence belongs to the ABC transporter superfamily. Phosphonates importer (TC 3.A.1.9.1) family. The complex is composed of two ATP-binding proteins (PhnC), two transmembrane proteins (PhnE) and a solute-binding protein (PhnD).

The protein localises to the cell inner membrane. The enzyme catalyses phosphonate(out) + ATP + H2O = phosphonate(in) + ADP + phosphate + H(+). Its function is as follows. Part of the ABC transporter complex PhnCDE involved in phosphonates import. Responsible for energy coupling to the transport system. The protein is Phosphonates import ATP-binding protein PhnC 1 of Trichodesmium erythraeum (strain IMS101).